Consider the following 142-residue polypeptide: MAKKNAGQLKLQVPAGAATPSPPIGPALGQRGINIMEFCKAFNAATQEMEKGAPIPVVITYYQDKSFTFSLKTPPVSFFLKKEANLKSGSKEPGKVFVGTISRDKICSIAEAKMKDLNANNIEAAMRMIEGSARSMGLEVVG.

This sequence belongs to the universal ribosomal protein uL11 family. In terms of assembly, part of the ribosomal stalk of the 50S ribosomal subunit. Interacts with L10 and the large rRNA to form the base of the stalk. L10 forms an elongated spine to which L12 dimers bind in a sequential fashion forming a multimeric L10(L12)X complex. In terms of processing, one or more lysine residues are methylated.

Its function is as follows. Forms part of the ribosomal stalk which helps the ribosome interact with GTP-bound translation factors. In Bartonella bacilliformis (strain ATCC 35685 / KC583 / Herrer 020/F12,63), this protein is Large ribosomal subunit protein uL11.